The primary structure comprises 124 residues: Large ribosomal subunit protein bL20 (124 aa).

Belongs to the bacterial ribosomal protein bL20 family.

Its function is as follows. Binds directly to 23S ribosomal RNA and is necessary for the in vitro assembly process of the 50S ribosomal subunit. It is not involved in the protein synthesizing functions of that subunit. The chain is Large ribosomal subunit protein bL20 from Ehrlichia chaffeensis (strain ATCC CRL-10679 / Arkansas).